Consider the following 231-residue polypeptide: 5'-methylthioadenosine/S-adenosylhomocysteine nucleosidase (231 aa).

Glu12 serves as the catalytic Proton acceptor. Substrate is bound by residues Gly78, Val153, and 174–175; that span reads ME. Asp198 acts as the Proton donor in catalysis.

This sequence belongs to the PNP/UDP phosphorylase family. MtnN subfamily.

The catalysed reaction is S-adenosyl-L-homocysteine + H2O = S-(5-deoxy-D-ribos-5-yl)-L-homocysteine + adenine. It catalyses the reaction S-methyl-5'-thioadenosine + H2O = 5-(methylsulfanyl)-D-ribose + adenine. The enzyme catalyses 5'-deoxyadenosine + H2O = 5-deoxy-D-ribose + adenine. The protein operates within amino-acid biosynthesis; L-methionine biosynthesis via salvage pathway; S-methyl-5-thio-alpha-D-ribose 1-phosphate from S-methyl-5'-thioadenosine (hydrolase route): step 1/2. Catalyzes the irreversible cleavage of the glycosidic bond in both 5'-methylthioadenosine (MTA) and S-adenosylhomocysteine (SAH/AdoHcy) to adenine and the corresponding thioribose, 5'-methylthioribose and S-ribosylhomocysteine, respectively. Also cleaves 5'-deoxyadenosine, a toxic by-product of radical S-adenosylmethionine (SAM) enzymes, into 5-deoxyribose and adenine. In Vibrio atlanticus (strain LGP32) (Vibrio splendidus (strain Mel32)), this protein is 5'-methylthioadenosine/S-adenosylhomocysteine nucleosidase.